Reading from the N-terminus, the 113-residue chain is Dynein light chain Tctex-type 1 (113 aa).

At Met1 the chain carries N-acetylmethionine. The segment at Gln41–Ile113 is interaction with GNB1.

Belongs to the dynein light chain Tctex-type family. In terms of assembly, homodimer. The cytoplasmic dynein 1 complex consists of two catalytic heavy chains (HCs) and a number of non-catalytic subunits presented by intermediate chains (ICs), light intermediate chains (LICs) and light chains (LCs); the composition seems to vary in respect to the IC, LIC and LC composition. The heavy chain homodimer serves as a scaffold for the probable homodimeric assembly of the respective non-catalytic subunits. The ICs and LICs bind directly to the HC dimer and dynein LCs assemble on the IC dimer. DYNLT1 and DYNLT3 compete for association with dynein IC (DYNC1I1 or DYNC1I2). Self-associates. Interacts with RHO. Interacts with DYNC1I1 and DYNC1I2. Interacts with DOC2A, DOC2B and SCN10A. Interacts with PVR. Interacts with SVIL isoform 2. Interacts with GNB1; the interaction occurs in presence of guanine nucleotide-binding protein G(T) subunit gamma; the interaction diminishes the association of DYNLT1 with dynein IC (DYNC1I1 or DYNC1I2). Interacts with GNB2, GNB3 and GNB5; the interactions occur in presence of guanine nucleotide-binding protein G(T) subunit gamma. Interacts with ACVR2B and ARHGEF2. Interacts with DNAI4. Interacts with CFAP61. Phosphorylated by BMPR2. The phosphorylation status is proposed to regulate the association with the cytoplasmic dynein complex and may have role in cytoplasmic dynein cargo release.

Its subcellular location is the golgi apparatus. The protein resides in the cytoplasm. The protein localises to the cytoskeleton. It is found in the spindle. Acts as one of several non-catalytic accessory components of the cytoplasmic dynein 1 complex that are thought to be involved in linking dynein to cargos and to adapter proteins that regulate dynein function. Cytoplasmic dynein 1 acts as a motor for the intracellular retrograde motility of vesicles and organelles along microtubules. Binds to transport cargos and is involved in apical cargo transport such as rhodopsin-bearing vesicles in polarized epithelia. Is involved in intracellular targeting of D-type retrovirus gag polyproteins to the cytoplasmic assembly site. May also be a accessory component of axonemal dynein. In terms of biological role, plays a role in neuronal morphogenesis; the function is independent of cytoplasmic dynein and seems to be coupled to regulation of the actin cytoskeleton by enhancing Rac1 activity. Required for neurite outgrowth. The function in neurogenesis may be regulated by association with a G-protein beta-gamma dimer. May function as a receptor-independent activator of heterotrimeric G-protein signaling; the activation appears to be independent of a nucleotide exchange. Plays a role in regulating neurogenesis; inhibits the genesis of neurons from precursor cells during cortical development presumably by antagonizing ARHGEF2. Unrelated to the role in retrograde microtubule-associated movement may play a role in the dimerization of cytoplasmic proteins/domains such as for ACVR2B. Binds to the cytoplasmic domain of ACVR2B and, in vitro, inhibits ACVR2B signaling. Involved in the regulation of mitotic spindle orientation. This Rattus norvegicus (Rat) protein is Dynein light chain Tctex-type 1 (Dynlt1).